The sequence spans 207 residues: Serotype 2 fimbrial subunit (207 aa).

The N-terminal stretch at M1 to A26 is a signal peptide. Residues C42 and C85 are joined by a disulfide bond.

It belongs to the fimbrial protein family.

It localises to the fimbrium. Its function is as follows. Bordetella pertussis is the causative agent of whooping cough. An essential step in the disease process is the attachment of the bacteria to the ciliated epithelium of the respiratory tract, enabling the organism to resist normal host-clearance mechanisms. It is unclear which bacterial cell surface component are responsible for adherence but the fimbriae of B.pertussis are prime candidates for being involved in this process. This chain is Serotype 2 fimbrial subunit (fim2), found in Bordetella pertussis (strain Tohama I / ATCC BAA-589 / NCTC 13251).